Reading from the N-terminus, the 255-residue chain is Imidazole glycerol phosphate synthase subunit HisF (255 aa).

Active-site residues include Asp12 and Asp131.

Belongs to the HisA/HisF family. In terms of assembly, heterodimer of HisH and HisF.

The protein resides in the cytoplasm. It catalyses the reaction 5-[(5-phospho-1-deoxy-D-ribulos-1-ylimino)methylamino]-1-(5-phospho-beta-D-ribosyl)imidazole-4-carboxamide + L-glutamine = D-erythro-1-(imidazol-4-yl)glycerol 3-phosphate + 5-amino-1-(5-phospho-beta-D-ribosyl)imidazole-4-carboxamide + L-glutamate + H(+). It functions in the pathway amino-acid biosynthesis; L-histidine biosynthesis; L-histidine from 5-phospho-alpha-D-ribose 1-diphosphate: step 5/9. IGPS catalyzes the conversion of PRFAR and glutamine to IGP, AICAR and glutamate. The HisF subunit catalyzes the cyclization activity that produces IGP and AICAR from PRFAR using the ammonia provided by the HisH subunit. This is Imidazole glycerol phosphate synthase subunit HisF from Vesicomyosocius okutanii subsp. Calyptogena okutanii (strain HA).